The chain runs to 112 residues: Protein ECM19 (112 aa).

A helical transmembrane segment spans residues 35 to 57 (NTLDMVTIGIACLVGVYTGTRFF). The tract at residues 82–112 (EDGNLLKVTPSLSSTPAAPPTPPTPPTPPQQ) is disordered. The segment covering 98–112 (AAPPTPPTPPTPPQQ) has biased composition (pro residues).

It localises to the mitochondrion membrane. Its function is as follows. May be involved in cell wall organization and biogenesis. This Saccharomyces cerevisiae (strain ATCC 204508 / S288c) (Baker's yeast) protein is Protein ECM19 (ECM19).